A 488-amino-acid chain; its full sequence is Glutamyl-tRNA(Gln) amidotransferase subunit A (488 aa).

Active-site charge relay system residues include Lys77 and Ser152. Ser176 serves as the catalytic Acyl-ester intermediate.

This sequence belongs to the amidase family. GatA subfamily. In terms of assembly, heterotrimer of A, B and C subunits.

It carries out the reaction L-glutamyl-tRNA(Gln) + L-glutamine + ATP + H2O = L-glutaminyl-tRNA(Gln) + L-glutamate + ADP + phosphate + H(+). In terms of biological role, allows the formation of correctly charged Gln-tRNA(Gln) through the transamidation of misacylated Glu-tRNA(Gln) in organisms which lack glutaminyl-tRNA synthetase. The reaction takes place in the presence of glutamine and ATP through an activated gamma-phospho-Glu-tRNA(Gln). In Streptococcus pneumoniae (strain JJA), this protein is Glutamyl-tRNA(Gln) amidotransferase subunit A.